The following is a 409-amino-acid chain: Imidazolonepropionase (409 aa).

Positions 78 and 80 each coordinate Fe(3+). 2 residues coordinate Zn(2+): histidine 78 and histidine 80. 3 residues coordinate 4-imidazolone-5-propanoate: arginine 87, tyrosine 150, and histidine 183. Tyrosine 150 contacts N-formimidoyl-L-glutamate. Histidine 248 lines the Fe(3+) pocket. Histidine 248 lines the Zn(2+) pocket. Glutamine 251 provides a ligand contact to 4-imidazolone-5-propanoate. Fe(3+) is bound at residue aspartate 323. Aspartate 323 is a Zn(2+) binding site. The N-formimidoyl-L-glutamate site is built by asparagine 325 and glycine 327. Threonine 328 lines the 4-imidazolone-5-propanoate pocket.

It belongs to the metallo-dependent hydrolases superfamily. HutI family. Requires Zn(2+) as cofactor. Fe(3+) is required as a cofactor.

The protein localises to the cytoplasm. It carries out the reaction 4-imidazolone-5-propanoate + H2O = N-formimidoyl-L-glutamate. The protein operates within amino-acid degradation; L-histidine degradation into L-glutamate; N-formimidoyl-L-glutamate from L-histidine: step 3/3. Its function is as follows. Catalyzes the hydrolytic cleavage of the carbon-nitrogen bond in imidazolone-5-propanoate to yield N-formimidoyl-L-glutamate. It is the third step in the universal histidine degradation pathway. This chain is Imidazolonepropionase, found in Mesorhizobium japonicum (strain LMG 29417 / CECT 9101 / MAFF 303099) (Mesorhizobium loti (strain MAFF 303099)).